A 340-amino-acid polypeptide reads, in one-letter code: UDP-3-O-(3-hydroxymyristoyl)glucosamine N-acyltransferase (340 aa).

Histidine 239 acts as the Proton acceptor in catalysis.

This sequence belongs to the transferase hexapeptide repeat family. LpxD subfamily. As to quaternary structure, homotrimer.

The enzyme catalyses a UDP-3-O-[(3R)-3-hydroxyacyl]-alpha-D-glucosamine + a (3R)-hydroxyacyl-[ACP] = a UDP-2-N,3-O-bis[(3R)-3-hydroxyacyl]-alpha-D-glucosamine + holo-[ACP] + H(+). It catalyses the reaction UDP-3-O-[(3R)-3-hydroxytetradecanoyl]-alpha-D-glucosamine + (3R)-hydroxytetradecanoyl-[ACP] = UDP-2-N,3-O-bis[(3R)-3-hydroxytetradecanoyl]-alpha-D-glucosamine + holo-[ACP] + H(+). Its pathway is glycolipid biosynthesis; lipid IV(A) biosynthesis; lipid IV(A) from (3R)-3-hydroxytetradecanoyl-[acyl-carrier-protein] and UDP-N-acetyl-alpha-D-glucosamine: step 3/6. Catalyzes the N-acylation of UDP-3-O-(hydroxytetradecanoyl)glucosamine using 3-hydroxytetradecanoyl-ACP as the acyl donor. Is involved in the biosynthesis of lipid A, a phosphorylated glycolipid that anchors the lipopolysaccharide to the outer membrane of the cell. This chain is UDP-3-O-(3-hydroxymyristoyl)glucosamine N-acyltransferase, found in Wigglesworthia glossinidia brevipalpis.